The chain runs to 270 residues: tRNA pseudouridine synthase B (270 aa).

Aspartate 49 (nucleophile) is an active-site residue.

It belongs to the pseudouridine synthase TruB family. Type 1 subfamily.

The enzyme catalyses uridine(55) in tRNA = pseudouridine(55) in tRNA. Its function is as follows. Responsible for synthesis of pseudouridine from uracil-55 in the psi GC loop of transfer RNAs. This chain is tRNA pseudouridine synthase B, found in Bartonella quintana (strain Toulouse) (Rochalimaea quintana).